Consider the following 309-residue polypeptide: Glutaminase (309 aa).

Substrate contacts are provided by Ser-64, Asn-114, Glu-160, Asn-167, Tyr-191, Tyr-243, and Val-261.

Belongs to the glutaminase family. Homotetramer.

It catalyses the reaction L-glutamine + H2O = L-glutamate + NH4(+). This is Glutaminase from Methylorubrum populi (strain ATCC BAA-705 / NCIMB 13946 / BJ001) (Methylobacterium populi).